The sequence spans 227 residues: Ribonuclease 3 (227 aa).

One can recognise an RNase III domain in the interval 4 to 126 (LDRLERKIGY…IIGAMSLDQG (123 aa)). Residue Glu-39 participates in Mg(2+) binding. Asp-43 is an active-site residue. 2 residues coordinate Mg(2+): Asp-112 and Glu-115. Glu-115 is a catalytic residue. The 74-residue stretch at 153 to 226 (DAKTRLQEYL…AEQILKELDI (74 aa)) folds into the DRBM domain.

It belongs to the ribonuclease III family. Homodimer. Mg(2+) is required as a cofactor.

It localises to the cytoplasm. The enzyme catalyses Endonucleolytic cleavage to 5'-phosphomonoester.. In terms of biological role, digests double-stranded RNA. Involved in the processing of primary rRNA transcript to yield the immediate precursors to the large and small rRNAs (23S and 16S). Processes some mRNAs, and tRNAs when they are encoded in the rRNA operon. Processes pre-crRNA and tracrRNA of type II CRISPR loci if present in the organism. This Haemophilus influenzae (strain ATCC 51907 / DSM 11121 / KW20 / Rd) protein is Ribonuclease 3.